Consider the following 479-residue polypeptide: Xylose isomerase (479 aa).

Residue histidine 144 is part of the active site. The Mn(2+) site is built by glutamate 275, glutamate 311, histidine 314, aspartate 339, aspartate 350, aspartate 352, and tyrosine 382.

It belongs to the xylose isomerase family. As to quaternary structure, homodimer. It depends on Mn(2+) as a cofactor.

It catalyses the reaction alpha-D-xylose = alpha-D-xylulofuranose. This is Xylose isomerase (XYLA) from Hordeum vulgare (Barley).